We begin with the raw amino-acid sequence, 119 residues long: MALSKRELFQKRRLRNRNKMRKMANGRARLSVHRSNKNISVQLIDDLNGVTLASASSLEPSLGVVGKNNVEASAKIGEAIAERAKKAGVEECYFDRGGFLFHGRVKALADAAREGGLKF.

This sequence belongs to the universal ribosomal protein uL18 family. In terms of assembly, part of the 50S ribosomal subunit; part of the 5S rRNA/L5/L18/L25 subcomplex. Contacts the 5S and 23S rRNAs.

Its function is as follows. This is one of the proteins that bind and probably mediate the attachment of the 5S RNA into the large ribosomal subunit, where it forms part of the central protuberance. The polypeptide is Large ribosomal subunit protein uL18 (Jannaschia sp. (strain CCS1)).